Here is a 66-residue protein sequence, read N- to C-terminus: Large ribosomal subunit protein uL29 (66 aa).

This sequence belongs to the universal ribosomal protein uL29 family.

This is Large ribosomal subunit protein uL29 from Borrelia hermsii (strain HS1 / DAH).